The primary structure comprises 125 residues: Acidic phospholipase A2 HTe (125 aa).

7 cysteine pairs are disulfide-bonded: C11-C77, C27-C124, C29-C45, C44-C105, C51-C98, C61-C91, and C84-C96. Ca(2+) contacts are provided by Y28, G30, and G32. Residue H48 is part of the active site. D49 lines the Ca(2+) pocket. Residue D99 is part of the active site.

Belongs to the phospholipase A2 family. Group I subfamily. D49 sub-subfamily. The cofactor is Ca(2+). No glycosylation was detected on this protein. As to expression, expressed by the venom gland.

The protein localises to the secreted. The enzyme catalyses a 1,2-diacyl-sn-glycero-3-phosphocholine + H2O = a 1-acyl-sn-glycero-3-phosphocholine + a fatty acid + H(+). Functionally, snake venom phospholipase A2 (PLA2) that blocks neuromuscular transmission, but that does not produce blockade by virtue of a selective action on nerve endings. Instead, the toxin acts both on nerve and on muscle. PLA2 catalyzes the calcium-dependent hydrolysis of the 2-acyl groups in 3-sn-phosphoglycerides. In Notechis scutatus scutatus (Mainland tiger snake), this protein is Acidic phospholipase A2 HTe.